We begin with the raw amino-acid sequence, 570 residues long: Sulfite reductase [NADPH] hemoprotein beta-component (570 aa).

Residues cysteine 434, cysteine 440, cysteine 479, and cysteine 483 each contribute to the [4Fe-4S] cluster site. Cysteine 483 contacts siroheme.

The protein belongs to the nitrite and sulfite reductase 4Fe-4S domain family. Alpha(8)-beta(8). The alpha component is a flavoprotein, the beta component is a hemoprotein. It depends on siroheme as a cofactor. Requires [4Fe-4S] cluster as cofactor.

The catalysed reaction is hydrogen sulfide + 3 NADP(+) + 3 H2O = sulfite + 3 NADPH + 4 H(+). It functions in the pathway sulfur metabolism; hydrogen sulfide biosynthesis; hydrogen sulfide from sulfite (NADPH route): step 1/1. Component of the sulfite reductase complex that catalyzes the 6-electron reduction of sulfite to sulfide. This is one of several activities required for the biosynthesis of L-cysteine from sulfate. The sequence is that of Sulfite reductase [NADPH] hemoprotein beta-component (cysI) from Salmonella typhimurium (strain LT2 / SGSC1412 / ATCC 700720).